We begin with the raw amino-acid sequence, 445 residues long: Phosphoglucosamine mutase (445 aa).

Ser-102 serves as the catalytic Phosphoserine intermediate. The Mg(2+) site is built by Ser-102, Asp-241, Asp-243, and Asp-245. At Ser-102 the chain carries Phosphoserine.

This sequence belongs to the phosphohexose mutase family. Requires Mg(2+) as cofactor. Post-translationally, activated by phosphorylation.

It catalyses the reaction alpha-D-glucosamine 1-phosphate = D-glucosamine 6-phosphate. Catalyzes the conversion of glucosamine-6-phosphate to glucosamine-1-phosphate. This Acinetobacter baumannii (strain AB0057) protein is Phosphoglucosamine mutase.